Here is a 467-residue protein sequence, read N- to C-terminus: Glycosyl hydrolase family 109 protein 1 (467 aa).

The first 22 residues, 1 to 22 (MKKLLLNTLIGLALLTCQTSFA), serve as a signal peptide directing secretion. NAD(+) is bound by residues 66 to 67 (MR), Asp88, 137 to 140 (WKHH), 157 to 158 (EV), and Asn186. Substrate contacts are provided by residues Tyr215, Arg231, 243-246 (YATH), and Tyr321. Tyr243 is an NAD(+) binding site.

This sequence belongs to the Gfo/Idh/MocA family. Glycosyl hydrolase 109 subfamily. It depends on NAD(+) as a cofactor.

Glycosidase. In Bacteroides thetaiotaomicron (strain ATCC 29148 / DSM 2079 / JCM 5827 / CCUG 10774 / NCTC 10582 / VPI-5482 / E50), this protein is Glycosyl hydrolase family 109 protein 1.